A 596-amino-acid chain; its full sequence is Aspartic proteinase yapsin-7 (596 aa).

The N-terminal stretch at 1–25 is a signal peptide; it reads MTCLILWYLWLISTFQLEFATASTA. Residues N26 and N59 are each glycosylated (N-linked (GlcNAc...) asparagine). Residues 26 to 575 lie on the Lumenal side of the membrane; it reads NTTTTAKSGT…SPYTFNKDPA (550 aa). A Peptidase A1 domain is found at 56 to 440; the sequence is YYVNSTFGTP…DLEDNTIAIA (385 aa). Residue D74 is part of the active site. N-linked (GlcNAc...) asparagine glycosylation is found at N106, N131, N140, N143, N148, N175, and N308. Residue D321 is part of the active site. N-linked (GlcNAc...) asparagine glycans are attached at residues N391, N455, N478, N484, N549, and N552. Residues 576 to 596 form a helical membrane-spanning segment; sequence GHVTRIASLLLLSIFSILIVL.

Belongs to the peptidase A1 family.

It localises to the cytoplasm. The protein localises to the endoplasmic reticulum membrane. In Saccharomyces cerevisiae (strain ATCC 204508 / S288c) (Baker's yeast), this protein is Aspartic proteinase yapsin-7 (YPS7).